The sequence spans 358 residues: cAMP-dependent protein kinase catalytic subunit PRKX (358 aa).

Methionine 1 is modified (N-acetylmethionine). The interval 1 to 34 is disordered; that stretch reads MEAPGLAQAAAAESDSRKVAEETPDGAPALCPSP. The Protein kinase domain occupies 49-303; that stretch reads FDTLATVGTG…ANDVKHHRWF (255 aa). Residues 55–63 and lysine 78 each bind ATP; that span reads VGTGTFGRV. Aspartate 172 serves as the catalytic Proton acceptor. At threonine 203 the chain carries Phosphothreonine. The AGC-kinase C-terminal domain maps to 304 to 358; the sequence is RSVDWEAVPQRKLKPPIVPKIAGDGDTSNFETYPENDWDTAAPVPQKDLEIFKNF.

This sequence belongs to the protein kinase superfamily. AGC Ser/Thr protein kinase family. cAMP subfamily. As to quaternary structure, like other cAMP-dependent protein kinases, the inactive holoenzyme is probably composed of 2 PRKX catalytic subunits and a dimer of regulatory subunits. Interacts (cAMP-dependent) specifically with the regulatory subunits PRKAR1A and PRKAR1B. Compared to other cAMP-dependent serine/threonine protein kinases, does not interact with the 2 other PKA regulatory subunits PRKAR2A and PRKAR2B. Interacts with cAMP-dependent protein kinase inhibitor/PKI proteins; inhibits PRKX. Interacts with GPKOW. Interacts with SMAD6. Interacts with PKD1; involved in differentiation and controlled morphogenesis of the kidney. Interacts with PIN1 (via WW domain). In terms of processing, phosphorylated; autophosphorylates in vitro. Widely expressed (at protein level). Specifically expressed in blood by macrophages and granulocytes according to PubMed:9860982.

The protein localises to the cytoplasm. The protein resides in the nucleus. The catalysed reaction is L-seryl-[protein] + ATP = O-phospho-L-seryl-[protein] + ADP + H(+). It catalyses the reaction L-threonyl-[protein] + ATP = O-phospho-L-threonyl-[protein] + ADP + H(+). Binding of cAMP to the PRKAR1A or PRKAR1B regulatory subunits induces dissociation of the holoenzyme heterotetramer. The released monomeric PRKX is then active and able to phosphorylate its substrates. Functionally, serine/threonine protein kinase regulated by and mediating cAMP signaling in cells. Acts through phosphorylation of downstream targets that may include CREB, SMAD6 and PKD1 and has multiple functions in cellular differentiation and epithelial morphogenesis. Regulates myeloid cell differentiation through SMAD6 phosphorylation. Involved in nephrogenesis by stimulating renal epithelial cell migration and tubulogenesis. Also involved in angiogenesis through stimulation of endothelial cell proliferation, migration and vascular-like structure formation. This chain is cAMP-dependent protein kinase catalytic subunit PRKX (PRKX), found in Homo sapiens (Human).